Consider the following 455-residue polypeptide: Bifunctional protein GlmU (455 aa).

The tract at residues 1 to 227 (MGLSVIILAA…CEEVQGVNDR (227 aa)) is pyrophosphorylase. Residues 8–11 (LAAG), lysine 22, glutamine 73, 78–79 (GT), 100–102 (YGD), glycine 137, glutamate 152, asparagine 167, and asparagine 225 contribute to the UDP-N-acetyl-alpha-D-glucosamine site. Position 102 (aspartate 102) interacts with Mg(2+). Position 225 (asparagine 225) interacts with Mg(2+). Residues 228 to 248 (WELTKLERYYQRLMAKKLSLA) are linker. The tract at residues 249 to 455 (GVTIIDPERF…KGWHRPTKKE (207 aa)) is N-acetyltransferase. Residues arginine 332 and lysine 350 each coordinate UDP-N-acetyl-alpha-D-glucosamine. Histidine 362 serves as the catalytic Proton acceptor. UDP-N-acetyl-alpha-D-glucosamine is bound by residues tyrosine 365 and asparagine 376. Residues alanine 379, 385-386 (NY), serine 404, alanine 422, and arginine 439 each bind acetyl-CoA.

It in the N-terminal section; belongs to the N-acetylglucosamine-1-phosphate uridyltransferase family. This sequence in the C-terminal section; belongs to the transferase hexapeptide repeat family. In terms of assembly, homotrimer. It depends on Mg(2+) as a cofactor.

It is found in the cytoplasm. It carries out the reaction alpha-D-glucosamine 1-phosphate + acetyl-CoA = N-acetyl-alpha-D-glucosamine 1-phosphate + CoA + H(+). The catalysed reaction is N-acetyl-alpha-D-glucosamine 1-phosphate + UTP + H(+) = UDP-N-acetyl-alpha-D-glucosamine + diphosphate. The protein operates within nucleotide-sugar biosynthesis; UDP-N-acetyl-alpha-D-glucosamine biosynthesis; N-acetyl-alpha-D-glucosamine 1-phosphate from alpha-D-glucosamine 6-phosphate (route II): step 2/2. Its pathway is nucleotide-sugar biosynthesis; UDP-N-acetyl-alpha-D-glucosamine biosynthesis; UDP-N-acetyl-alpha-D-glucosamine from N-acetyl-alpha-D-glucosamine 1-phosphate: step 1/1. It functions in the pathway bacterial outer membrane biogenesis; LPS lipid A biosynthesis. In terms of biological role, catalyzes the last two sequential reactions in the de novo biosynthetic pathway for UDP-N-acetylglucosamine (UDP-GlcNAc). The C-terminal domain catalyzes the transfer of acetyl group from acetyl coenzyme A to glucosamine-1-phosphate (GlcN-1-P) to produce N-acetylglucosamine-1-phosphate (GlcNAc-1-P), which is converted into UDP-GlcNAc by the transfer of uridine 5-monophosphate (from uridine 5-triphosphate), a reaction catalyzed by the N-terminal domain. The sequence is that of Bifunctional protein GlmU from Coxiella burnetii (strain CbuK_Q154) (Coxiella burnetii (strain Q154)).